A 158-amino-acid polypeptide reads, in one-letter code: UPF0262 protein RSKD131_1985 (158 aa).

The protein belongs to the UPF0262 family.

This chain is UPF0262 protein RSKD131_1985, found in Cereibacter sphaeroides (strain KD131 / KCTC 12085) (Rhodobacter sphaeroides).